A 199-amino-acid polypeptide reads, in one-letter code: NAD(P)H dehydrogenase (quinone) (199 aa).

In terms of domain architecture, Flavodoxin-like spans 4–190 (VLVLYYSMYG…AIARFQGKHV (187 aa)). FMN-binding positions include 10–15 (SMYGHI) and 79–81 (TRF). Residue tyrosine 12 participates in NAD(+) binding. A substrate-binding site is contributed by tryptophan 99. Residues 114 to 119 (STGTGG) and histidine 134 each bind FMN.

This sequence belongs to the WrbA family. FMN is required as a cofactor.

The enzyme catalyses a quinone + NADH + H(+) = a quinol + NAD(+). The catalysed reaction is a quinone + NADPH + H(+) = a quinol + NADP(+). The polypeptide is NAD(P)H dehydrogenase (quinone) (Marinobacter nauticus (strain ATCC 700491 / DSM 11845 / VT8) (Marinobacter aquaeolei)).